We begin with the raw amino-acid sequence, 486 residues long: High-affinity iron permease fer2 (486 aa).

2 helical membrane passes run 76 to 96 (IVLL…AAFL) and 113 to 133 (LWEG…SLAI). An N-linked (GlcNAc...) asparagine glycan is attached at N174. Residues 175–209 (HSDDSASASSSSARQAAEEEAGTKTTRTEKLNPLE) are disordered. Over residues 179–189 (SASASSSSARQ) the composition is skewed to low complexity. The next 3 membrane-spanning stretches (helical) occupy residues 252–272 (ALFT…VVFI), 283–303 (SIPL…FLIF), and 308–328 (LVSV…IASG). N393 carries N-linked (GlcNAc...) asparagine glycosylation. The helical transmembrane segment at 400–420 (SVFMYIGYWFAVAGYLWYQIW) threads the bilayer. An N-linked (GlcNAc...) asparagine glycan is attached at N438. A disordered region spans residues 441–486 (IQARQRKQEKAHQRQLREADQEEHGHSSNSDKQQHPSEAGPSTLSH). A compositionally biased stretch (basic and acidic residues) spans 446–466 (RKQEKAHQRQLREADQEEHGH).

The protein belongs to the oxidase-dependent Fe transporter (OFeT) (TC 9.A.10.1) family.

It is found in the cell membrane. In terms of biological role, permease for high affinity iron uptake. In Mycosarcoma maydis (Corn smut fungus), this protein is High-affinity iron permease fer2.